A 427-amino-acid polypeptide reads, in one-letter code: MSNNQILFERAQKTIPGGVNSPVRAFRSVGGTPRFVARAQGPYFWDADGKQYIDYIGSWGPMIVGHVHPEVLSAVQNVLADGFSFGAPTEAEIEIAEEICKLVPSIEQVRMVSSGTEATMSALRLARGFTGRSRIVKFEGCYHGHADSLLVKAGSGLLTFGNPTSAGVPADIAKHTTVLEYNNVAALEEAFGAFGDEIAAVIVEPVAGNMNLVRGTPEFLNALRALCTKHGAVLIFDEVMCGFRVALGGAQQHYGITADLTCLGKVIGGGMPAAAFGGRRDIMAHLAPLGGVYQAGTLSGNPIAVAAGLKTLQLIQAPGFYDALTAQTKRLADGLAAEARAAGVPFVADSIGAMFGLYFTERVPTSFAEVTKSDTERFNRFFHLMLDEGVYFAPSAYEAGFVSSTHDDAVIDATLAAARRAFAALAA.

Lys-265 bears the N6-(pyridoxal phosphate)lysine mark.

Belongs to the class-III pyridoxal-phosphate-dependent aminotransferase family. HemL subfamily. As to quaternary structure, homodimer. Pyridoxal 5'-phosphate is required as a cofactor.

The protein resides in the cytoplasm. It carries out the reaction (S)-4-amino-5-oxopentanoate = 5-aminolevulinate. Its pathway is porphyrin-containing compound metabolism; protoporphyrin-IX biosynthesis; 5-aminolevulinate from L-glutamyl-tRNA(Glu): step 2/2. This is Glutamate-1-semialdehyde 2,1-aminomutase from Burkholderia lata (strain ATCC 17760 / DSM 23089 / LMG 22485 / NCIMB 9086 / R18194 / 383).